The following is a 975-amino-acid chain: Glycine dehydrogenase (decarboxylating) (975 aa).

Lys723 is modified (N6-(pyridoxal phosphate)lysine).

This sequence belongs to the GcvP family. As to quaternary structure, the glycine cleavage system is composed of four proteins: P, T, L and H. It depends on pyridoxal 5'-phosphate as a cofactor.

It carries out the reaction N(6)-[(R)-lipoyl]-L-lysyl-[glycine-cleavage complex H protein] + glycine + H(+) = N(6)-[(R)-S(8)-aminomethyldihydrolipoyl]-L-lysyl-[glycine-cleavage complex H protein] + CO2. Functionally, the glycine cleavage system catalyzes the degradation of glycine. The P protein binds the alpha-amino group of glycine through its pyridoxal phosphate cofactor; CO(2) is released and the remaining methylamine moiety is then transferred to the lipoamide cofactor of the H protein. This chain is Glycine dehydrogenase (decarboxylating), found in Burkholderia orbicola (strain MC0-3).